A 339-amino-acid polypeptide reads, in one-letter code: NADH-quinone oxidoreductase subunit H (339 aa).

Transmembrane regions (helical) follow at residues 9–29, 82–102, 115–135, 161–181, 187–207, 235–255, 275–295, and 311–331; these read IFPLIIIALKVVAITIPLILC, ILFVLAPMITFILSLIGWAVI, VGVLYILAISSLSVYGIIIAG, MGLVIITVLLTTGTLNLSQIV, MPWWIDLMLMPMGVVFFISVL, MGFALFFLGEYANMILVSAMT, IPGFFWFVFKVGFLLFCFLWI, and GWKVFLPLTLFWVVLVSSVLI.

It belongs to the complex I subunit 1 family. NDH-1 is composed of 14 different subunits. Subunits NuoA, H, J, K, L, M, N constitute the membrane sector of the complex.

It localises to the cell inner membrane. It carries out the reaction a quinone + NADH + 5 H(+)(in) = a quinol + NAD(+) + 4 H(+)(out). Functionally, NDH-1 shuttles electrons from NADH, via FMN and iron-sulfur (Fe-S) centers, to quinones in the respiratory chain. The immediate electron acceptor for the enzyme in this species is believed to be ubiquinone. Couples the redox reaction to proton translocation (for every two electrons transferred, four hydrogen ions are translocated across the cytoplasmic membrane), and thus conserves the redox energy in a proton gradient. This subunit may bind ubiquinone. This chain is NADH-quinone oxidoreductase subunit H, found in Rickettsia bellii (strain OSU 85-389).